A 157-amino-acid chain; its full sequence is MTEKRTEITIYTDGACSGNPGPGGYGIIILSEKKRQELSGGYKLTTNNRMELMAVIVGLEQLEIPSIVNLYTDSKYIVDAVTKGWAKRWRANSWKRNKKDKAMNPDLWGKLLDLCSKHQVEFSWVRGHSGNIENERCDKLAVKASQKLDLPSDLGYQ.

Positions 4–146 (KRTEITIYTD…CDKLAVKASQ (143 aa)) constitute an RNase H type-1 domain. Mg(2+) contacts are provided by aspartate 13, glutamate 51, aspartate 73, and aspartate 138.

The protein belongs to the RNase H family. As to quaternary structure, monomer. Requires Mg(2+) as cofactor.

It localises to the cytoplasm. It carries out the reaction Endonucleolytic cleavage to 5'-phosphomonoester.. Functionally, endonuclease that specifically degrades the RNA of RNA-DNA hybrids. This Trichodesmium erythraeum (strain IMS101) protein is Ribonuclease H.